A 393-amino-acid chain; its full sequence is tRNA (guanine-N(7)-)-methyltransferase (393 aa).

S-adenosyl-L-methionine-binding residues include Glu-124, Glu-149, and Asp-176. Asp-232 serves as a coordination point for substrate.

The protein belongs to the class I-like SAM-binding methyltransferase superfamily. TrmB family.

The catalysed reaction is guanosine(46) in tRNA + S-adenosyl-L-methionine = N(7)-methylguanosine(46) in tRNA + S-adenosyl-L-homocysteine. Its pathway is tRNA modification; N(7)-methylguanine-tRNA biosynthesis. Its function is as follows. Catalyzes the formation of N(7)-methylguanine at position 46 (m7G46) in tRNA. The polypeptide is tRNA (guanine-N(7)-)-methyltransferase (Helicobacter pylori (strain HPAG1)).